The chain runs to 393 residues: Glycerol-3-phosphate dehydrogenase [NAD(+)] 1 (393 aa).

NAD(+)-binding positions include 45-50 (GSGNWG), Phe133, Lys157, and Ala190. Residue Lys157 participates in substrate binding. Lys250 acts as the Proton acceptor in catalysis. Residues Arg316 and Gln345 each coordinate NAD(+). 316 to 317 (RN) is a substrate binding site.

Belongs to the NAD-dependent glycerol-3-phosphate dehydrogenase family.

The enzyme catalyses sn-glycerol 3-phosphate + NAD(+) = dihydroxyacetone phosphate + NADH + H(+). The chain is Glycerol-3-phosphate dehydrogenase [NAD(+)] 1 (gpd1) from Cyberlindnera jadinii (Torula yeast).